Reading from the N-terminus, the 544-residue chain is MFS-type transporter prx5 (544 aa).

The interval 1–28 (MAVDTEKDSVQAGSPMETPGSPVDETTE) is disordered. The next 13 membrane-spanning stretches (helical) occupy residues 36–56 (WIVS…IPVV), 90–110 (LDHL…VASA), 116–136 (VIAG…AAFA), 148–168 (IGVV…PVTA), 178–198 (AWNF…LLFL), 221–241 (GAFL…WAGV), 249–269 (VVAP…WESF), 290–310 (FTAP…SSIL), 330–350 (VILS…LTCF), 361–381 (LTGS…VTPT), 387–407 (IAFI…SIAI), 418–438 (GVSG…ATSI), and 505–525 (AIFV…AACL).

The protein belongs to the major facilitator superfamily.

The protein localises to the cell membrane. Its function is as follows. MFS-type transporter; part of the gene cluster that mediates the biosynthesis of PR-toxin, a bicyclic sesquiterpene belonging to the eremophilane class and acting as a mycotoxin. The chain is MFS-type transporter prx5 from Penicillium rubens (strain ATCC 28089 / DSM 1075 / NRRL 1951 / Wisconsin 54-1255) (Penicillium chrysogenum).